The sequence spans 333 residues: Uroporphyrinogen decarboxylase (333 aa).

Substrate contacts are provided by residues 22–26 (RQAGR), D71, Y145, S200, and H310.

It belongs to the uroporphyrinogen decarboxylase family. As to quaternary structure, homodimer.

The protein localises to the cytoplasm. It carries out the reaction uroporphyrinogen III + 4 H(+) = coproporphyrinogen III + 4 CO2. It functions in the pathway porphyrin-containing compound metabolism; protoporphyrin-IX biosynthesis; coproporphyrinogen-III from 5-aminolevulinate: step 4/4. Catalyzes the decarboxylation of four acetate groups of uroporphyrinogen-III to yield coproporphyrinogen-III. The chain is Uroporphyrinogen decarboxylase from Thermoplasma acidophilum (strain ATCC 25905 / DSM 1728 / JCM 9062 / NBRC 15155 / AMRC-C165).